We begin with the raw amino-acid sequence, 132 residues long: uncharacterized protein (132 aa).

A helical membrane pass occupies residues 10 to 30; sequence LVLFFTIILIALCPFVYYLWD. A coiled-coil region spans residues 50–79; it reads KNCSTEIEHAIEEHKRKNKEKKEAKEKRLA.

The protein resides in the membrane. This is an uncharacterized protein from Invertebrate iridescent virus 6 (IIV-6).